We begin with the raw amino-acid sequence, 260 residues long: Trialysin (260 aa).

A signal peptide spans 1-19 (MSKFWLLLLLVAAFQFAHS). The propeptide at 20 to 55 (YPAAEYELDETTNDEVRQFIGDGYFEDEGDDGDEER) is removed in mature form, probably by the serine protease triapsin.

The protein belongs to the redulysin-like family. As to expression, expressed in salivary glands.

The protein localises to the secreted. Its subcellular location is the target cell membrane. Functionally, pore-forming protein that induces lysis of T.cruzi trypomastigotes, bacteria E.coli and human red blood cells. The parasite lysis is much more important than the hemolysis, probably due to difference in membrane composition. Its action on protozoan parasites and bacteria may indicate a role in the control of microorganism growth in the salivary glands. This chain is Trialysin, found in Triatoma infestans (Assassin bug).